Reading from the N-terminus, the 367-residue chain is MDAQCSAKVNARKRRKEAPGPNGATEEDGVPSKVQRCAVGLRQPAPFSDEIEVDFSKPYVRVTMEEASRGTPCERPVRVYADGIFDLFHSGHARALMQAKNLFPNTYLIVGVCSDELTHNFKGFTVMNENERYDAVQHCRYVDEVVRNAPWTLTPEFLAEHRIDFVAHDDIPYSSAGSDDVYKHIKEAGMFAPTQRTEGISTSDIITRIVRDYDVYARRNLQRGYTAKELNVSFINEKKYHLQERVDKVKKKVKDVEEKSKEFVQKVEEKSIDLIQKWEEKSREFIGSFLEMFGPEGALKHMLKEGKGRMLQAISPKQSPSSSPTRERSPSPSFRWPFSGKTSPPCSPANLSRHKAAAYDISEDEED.

Met1 carries the N-acetylmethionine modification. A disordered region spans residues 1 to 33 (MDAQCSAKVNARKRRKEAPGPNGATEEDGVPSK). Residue Lys8 is modified to N6-acetyllysine. The CTP site is built by Ile84, Phe85, His92, and Lys122. Phosphocholine contacts are provided by Lys122 and Trp151. Residues His168, Asp169, Tyr173, Gln195, Arg196, Thr197, and Ile200 each coordinate CTP. 2 amphipathic regions span residues 228–287 (KELN…EFIG) and 298–315 (ALKH…QAIS). Position 233 is a phosphoserine (Ser233). Residues 272–293 (IDLIQKWEEKSREFIGSFLEMF) form an autoinhibitory (AI) region. The segment at 313 to 367 (AISPKQSPSSSPTRERSPSPSFRWPFSGKTSPPCSPANLSRHKAAAYDISEDEED) is disordered. Phosphoserine is present on residues Ser315, Ser319, Ser321, Ser322, and Ser323. Repeat 1 spans residues 319-324 (SPSSSP). Residues 319–339 (SPSSSPTRERSPSPSFRWPFS) show a composition bias toward low complexity. Thr325 carries the phosphothreonine modification. A phosphoserine mark is found at Ser329, Ser331, and Ser333. Residues 329–333 (SPSPS) form a 2; approximate repeat. Phosphothreonine is present on Thr342. Ser343, Ser347, Ser352, and Ser362 each carry phosphoserine. Residues 343–348 (SPPCSP) form repeat 3.

The protein belongs to the cytidylyltransferase family. In terms of assembly, homodimer. In terms of processing, the serine residues of the C-terminus are phosphorylated. The inactive soluble form is stabilized by phosphorylation, the active membrane bound form is promoted by anionic lipids or diacylglycerol, and is stabilized by dephosphorylation. Post-translationally, monoubiquitinated by the SCF(FBXL2) complex, leading to proteasomal degradation. As to expression, brain, placenta, liver, fetal and adult lung.

It is found in the cytoplasm. The protein localises to the cytosol. The protein resides in the membrane. Its subcellular location is the endoplasmic reticulum membrane. It localises to the nucleus. The enzyme catalyses phosphocholine + CTP + H(+) = CDP-choline + diphosphate. The protein operates within phospholipid metabolism; phosphatidylcholine biosynthesis; phosphatidylcholine from phosphocholine: step 1/2. Its activity is regulated as follows. Interconverts between an inactive cytosolic form and an active membrane-bound form. Activation involves disruption of an inhibitory interaction between helices at the base of the active site and the autoinhibitory (AI) region. Activated by anionic lipid vesicles and by oleic acid or diacylglycerol-containing phosphatidylcholine vesicles. Catalyzes the key rate-limiting step in the CDP-choline pathway for phosphatidylcholine biosynthesis. This is Choline-phosphate cytidylyltransferase A (PCYT1A) from Homo sapiens (Human).